Here is a 156-residue protein sequence, read N- to C-terminus: Small ribosomal subunit protein uS7 (156 aa).

This sequence belongs to the universal ribosomal protein uS7 family. In terms of assembly, part of the 30S ribosomal subunit. Contacts proteins S9 and S11.

Its function is as follows. One of the primary rRNA binding proteins, it binds directly to 16S rRNA where it nucleates assembly of the head domain of the 30S subunit. Is located at the subunit interface close to the decoding center, probably blocks exit of the E-site tRNA. This Shewanella denitrificans (strain OS217 / ATCC BAA-1090 / DSM 15013) protein is Small ribosomal subunit protein uS7.